An 86-amino-acid polypeptide reads, in one-letter code: Weak neurotoxin 5 (86 aa).

The N-terminal stretch at 1-21 is a signal peptide; the sequence is MKTLLLTLVVVTIVCLDLGYT. Cystine bridges form between Cys-24–Cys-45, Cys-27–Cys-32, Cys-38–Cys-63, Cys-67–Cys-78, and Cys-79–Cys-84.

Belongs to the three-finger toxin family. Ancestral subfamily. Orphan group II sub-subfamily. Expressed by the venom gland.

It is found in the secreted. Its function is as follows. Binds with low affinity to muscular and very low affinity to neuronal (alpha-7/CHRNA7) nicotinic acetylcholine receptor (nAChR). This Naja sputatrix (Malayan spitting cobra) protein is Weak neurotoxin 5.